The sequence spans 408 residues: Chaperone protein dnaJ 1, mitochondrial (408 aa).

The N-terminal 26 residues, 1-26 (MRRFNWVLRHVQARRTFDSAIGLRQG), are a transit peptide targeting the mitochondrion. One can recognise a J domain in the interval 48–113 (NYYDVLGVSP…ERREEYDKLQ (66 aa)). A CR-type zinc finger spans residues 173-247 (GCTKRLSFDA…CRGSGIVEGT (75 aa)). Zn(2+) is bound by residues Cys186, Cys189, Cys203, Cys206, Cys221, Cys224, Cys235, and Cys238. CXXCXGXG motif repeat units lie at residues 186–193 (CDSCDGLG), 203–210 (CPTCRGVG), 221–228 (CQTCKGTG), and 235–242 (CMSCRGSG).

It belongs to the DnaJ family. B/II subfamily. Homodimer. The cofactor is Zn(2+). In terms of tissue distribution, ubiquitous.

Its subcellular location is the mitochondrion. Its function is as follows. Plays a continuous role in plant development probably in the structural organization of compartments. The protein is Chaperone protein dnaJ 1, mitochondrial (ATJ1) of Arabidopsis thaliana (Mouse-ear cress).